The sequence spans 695 residues: Rho-related BTB domain-containing protein 1 (695 aa).

Residues 1–210 (MDSDMDYERP…DNAIRAALIS (210 aa)) are rho-like. GTP is bound by residues 21–28 (GDNAVGKT), 84–88 (DTFGD), and 140–143 (CQLD). 2 consecutive BTB domains span residues 266–426 (ADVL…DEKE) and 484–551 (SDVT…SPNL). The segment at 325–351 (SLGSAEEGKEGPQRTPQADPGASSGQD) is disordered.

Belongs to the small GTPase superfamily. Rho family. As to expression, highest expression in heart and testis.

This is Rho-related BTB domain-containing protein 1 (Rhobtb1) from Mus musculus (Mouse).